The primary structure comprises 185 residues: Elongation factor P (185 aa).

Belongs to the elongation factor P family.

It is found in the cytoplasm. It functions in the pathway protein biosynthesis; polypeptide chain elongation. In terms of biological role, involved in peptide bond synthesis. Stimulates efficient translation and peptide-bond synthesis on native or reconstituted 70S ribosomes in vitro. Probably functions indirectly by altering the affinity of the ribosome for aminoacyl-tRNA, thus increasing their reactivity as acceptors for peptidyl transferase. This is Elongation factor P from Burkholderia multivorans (strain ATCC 17616 / 249).